Consider the following 320-residue polypeptide: tRNA uridine(34) hydroxylase (320 aa).

The Rhodanese domain maps to 123 to 217 (EDEDTVILDA…YGKDPETKGQ (95 aa)). Cys177 functions as the Cysteine persulfide intermediate in the catalytic mechanism.

The protein belongs to the TrhO family.

The catalysed reaction is uridine(34) in tRNA + AH2 + O2 = 5-hydroxyuridine(34) in tRNA + A + H2O. Its function is as follows. Catalyzes oxygen-dependent 5-hydroxyuridine (ho5U) modification at position 34 in tRNAs. This is tRNA uridine(34) hydroxylase from Staphylococcus haemolyticus (strain JCSC1435).